A 36-amino-acid chain; its full sequence is Pancreatic polypeptide (36 aa).

At Tyr36 the chain carries Tyrosine amide.

This sequence belongs to the NPY family.

It localises to the secreted. In terms of biological role, hormone secreted by pancreatic cells that acts as a regulator of pancreatic and gastrointestinal functions. The polypeptide is Pancreatic polypeptide (PPY) (Meleagris gallopavo (Wild turkey)).